A 93-amino-acid chain; its full sequence is Exodeoxyribonuclease 7 small subunit (93 aa).

A disordered region spans residues 1–22 (MAKTASPGATPPGNGAEPLPDN).

This sequence belongs to the XseB family. Heterooligomer composed of large and small subunits.

It is found in the cytoplasm. The enzyme catalyses Exonucleolytic cleavage in either 5'- to 3'- or 3'- to 5'-direction to yield nucleoside 5'-phosphates.. Its function is as follows. Bidirectionally degrades single-stranded DNA into large acid-insoluble oligonucleotides, which are then degraded further into small acid-soluble oligonucleotides. In Burkholderia multivorans (strain ATCC 17616 / 249), this protein is Exodeoxyribonuclease 7 small subunit.